We begin with the raw amino-acid sequence, 98 residues long: MTLTKVELADNLIEKLHLNKRDAKELVENFFEEIRVALETGEDVKLSGFGNFELRDKSSRPGRNPKTGESVPVSARRVVAFKPGQKLRARVEKTKPKS.

The tract at residues 54–74 (LRDKSSRPGRNPKTGESVPVS) is disordered.

This sequence belongs to the bacterial histone-like protein family. As to quaternary structure, heterodimer of an alpha and a beta chain.

Functionally, this protein is one of the two subunits of integration host factor, a specific DNA-binding protein that functions in genetic recombination as well as in transcriptional and translational control. The sequence is that of Integration host factor subunit alpha (ihfA) from Pasteurella multocida (strain Pm70).